Here is a 238-residue protein sequence, read N- to C-terminus: Ribonuclease PH (238 aa).

Phosphate is bound by residues arginine 86 and 124–126 (GTR).

It belongs to the RNase PH family. Homohexameric ring arranged as a trimer of dimers.

The catalysed reaction is tRNA(n+1) + phosphate = tRNA(n) + a ribonucleoside 5'-diphosphate. Functionally, phosphorolytic 3'-5' exoribonuclease that plays an important role in tRNA 3'-end maturation. Removes nucleotide residues following the 3'-CCA terminus of tRNAs; can also add nucleotides to the ends of RNA molecules by using nucleoside diphosphates as substrates, but this may not be physiologically important. Probably plays a role in initiation of 16S rRNA degradation (leading to ribosome degradation) during starvation. This chain is Ribonuclease PH, found in Hahella chejuensis (strain KCTC 2396).